A 490-amino-acid polypeptide reads, in one-letter code: Pup--protein ligase (490 aa).

Glu9 provides a ligand contact to Mg(2+). Arg53 contributes to the ATP binding site. Position 55 (Tyr55) interacts with Mg(2+). The active-site Proton acceptor is Asp57. Residue Glu63 coordinates Mg(2+). Ser66 is an ATP binding site. The interval 160–181 (KTHPNGGPVPGSTDPASSTGVP) is disordered. Trp441 is a binding site for ATP.

This sequence belongs to the Pup ligase/Pup deamidase family. Pup-conjugating enzyme subfamily.

It carries out the reaction ATP + [prokaryotic ubiquitin-like protein]-L-glutamate + [protein]-L-lysine = ADP + phosphate + N(6)-([prokaryotic ubiquitin-like protein]-gamma-L-glutamyl)-[protein]-L-lysine.. It participates in protein degradation; proteasomal Pup-dependent pathway. The protein operates within protein modification; protein pupylation. Catalyzes the covalent attachment of the prokaryotic ubiquitin-like protein modifier Pup to the proteasomal substrate proteins, thereby targeting them for proteasomal degradation. This tagging system is termed pupylation. The ligation reaction involves the side-chain carboxylate of the C-terminal glutamate of Pup and the side-chain amino group of a substrate lysine. In Rothia mucilaginosa (strain DY-18) (Stomatococcus mucilaginosus), this protein is Pup--protein ligase.